Consider the following 171-residue polypeptide: Shikimate kinase (171 aa).

Position 14–19 (14–19 (GAGKST)) interacts with ATP. Serine 18 serves as a coordination point for Mg(2+). The substrate site is built by aspartate 36, arginine 60, and glycine 82. Arginine 120 contacts ATP. Arginine 139 contacts substrate. Glutamine 156 is a binding site for ATP.

The protein belongs to the shikimate kinase family. Monomer. It depends on Mg(2+) as a cofactor.

It is found in the cytoplasm. It carries out the reaction shikimate + ATP = 3-phosphoshikimate + ADP + H(+). It participates in metabolic intermediate biosynthesis; chorismate biosynthesis; chorismate from D-erythrose 4-phosphate and phosphoenolpyruvate: step 5/7. In terms of biological role, catalyzes the specific phosphorylation of the 3-hydroxyl group of shikimic acid using ATP as a cosubstrate. The polypeptide is Shikimate kinase (Shewanella sp. (strain ANA-3)).